Reading from the N-terminus, the 562-residue chain is Arginine--tRNA ligase (562 aa).

Residues 122–132 (PNIAKDMHVGH) carry the 'HIGH' region motif.

This sequence belongs to the class-I aminoacyl-tRNA synthetase family. In terms of assembly, monomer.

It localises to the cytoplasm. It carries out the reaction tRNA(Arg) + L-arginine + ATP = L-arginyl-tRNA(Arg) + AMP + diphosphate. The polypeptide is Arginine--tRNA ligase (Chlamydia abortus (strain DSM 27085 / S26/3) (Chlamydophila abortus)).